The chain runs to 79 residues: Exodeoxyribonuclease 7 small subunit (79 aa).

This sequence belongs to the XseB family. As to quaternary structure, heterooligomer composed of large and small subunits.

It is found in the cytoplasm. The enzyme catalyses Exonucleolytic cleavage in either 5'- to 3'- or 3'- to 5'-direction to yield nucleoside 5'-phosphates.. Functionally, bidirectionally degrades single-stranded DNA into large acid-insoluble oligonucleotides, which are then degraded further into small acid-soluble oligonucleotides. The protein is Exodeoxyribonuclease 7 small subunit of Haemophilus influenzae (strain PittGG).